The following is a 456-amino-acid chain: Frizzled/smoothened-like sans CRD protein F (456 aa).

The signal sequence occupies residues 1–30 (MIFNNLKNQNKIINFLIIFYFLSFLKQIES). Residues 31-92 (QSINITSSSS…PFFTINEWNK (62 aa)) are Extracellular-facing. Asn-34, Asn-52, and Asn-70 each carry an N-linked (GlcNAc...) asparagine glycan. The helical transmembrane segment at 93-113 (FLNMSLVMGTISFFSGLFLLV) threads the bilayer. The Cytoplasmic portion of the chain corresponds to 114–127 (TYSPIVNKTHNRHT). Residues 128–148 (IGVMCMSFGVCLAMCSDMWNF) form a helical membrane-spanning segment. At 149–174 (GSNFTEKSICPSPGQYLSTSNARCLS) the chain is on the extracellular side. Asn-151 carries N-linked (GlcNAc...) asparagine glycosylation. A helical transmembrane segment spans residues 175–195 (SGIFLQFGGVFGFLNWTLLSF). Residues 196 to 211 (DLFMNIKGIITKNYDK) are Cytoplasmic-facing. A helical membrane pass occupies residues 212 to 232 (YYVSGTFIIAIIFTFVPIVND). Topologically, residues 233–252 (QYSMSYIGLGCWLGSAMYQL) are extracellular. A helical transmembrane segment spans residues 253–273 (IFFWILLSICLIVSSVFIILI). The Cytoplasmic portion of the chain corresponds to 274–297 (LKEVYIIIKLSKQKTSLKGNIRPL). Residues 298 to 318 (ICISITGFAFFYMFFYYISIV) form a helical membrane-spanning segment. Topologically, residues 319–354 (VEGDYYERVLNEYTDCLMDPTKDISECKSPRMSVAS) are extracellular. Residues 355–375 (EFVFLLCLRLLGIGAFIFYGI) form a helical membrane-spanning segment. At 376 to 456 (NNKVKKIWLN…ESSLNSVDEI (81 aa)) the chain is on the cytoplasmic side. Residues 403 to 422 (ADNDKSNSNGSKVLYRTNNT) are disordered.

It belongs to the G-protein coupled receptor Fz/Smo family.

It is found in the membrane. This is Frizzled/smoothened-like sans CRD protein F (fscF) from Dictyostelium discoideum (Social amoeba).